A 188-amino-acid chain; its full sequence is Ion-translocating oxidoreductase complex subunit B (188 aa).

Residues 1–26 are hydrophobic; that stretch reads MMSLWIAIGALSTLALVSGVVLGFAA. A 4Fe-4S domain is found at 32–91; sequence DEDPVVEQVDAILPQSQCGQCGYPGCRPYAEAVSTGGEKINKCAPGGEQVMLKLAELLAV. Cysteine 49, cysteine 52, cysteine 57, cysteine 74, cysteine 117, cysteine 120, cysteine 123, cysteine 127, cysteine 147, cysteine 150, cysteine 153, and cysteine 157 together coordinate [4Fe-4S] cluster. 4Fe-4S ferredoxin-type domains lie at 108–137 and 138–167; these read KVAF…GATR and AMHT…MIPV.

This sequence belongs to the 4Fe4S bacterial-type ferredoxin family. RnfB subfamily. As to quaternary structure, the complex is composed of six subunits: RnfA, RnfB, RnfC, RnfD, RnfE and RnfG. [4Fe-4S] cluster is required as a cofactor.

It localises to the cell inner membrane. Part of a membrane-bound complex that couples electron transfer with translocation of ions across the membrane. The sequence is that of Ion-translocating oxidoreductase complex subunit B from Yersinia pestis bv. Antiqua (strain Antiqua).